A 164-amino-acid polypeptide reads, in one-letter code: MDKNALRKQILQKRMALSTIEKSHLDQKINQKLVAFLTPKPCIKTIALYEPIKNEVTFVDFFFEFLKINQIRAVYPKVISDTEIIFIDQETNTFEPNQIDCFLIPLVGFNKDNYRLGFGKGYYDRYLMQLTRQQPKIGIAYSFQKGDFLADPWDVQLDLIINDE.

3-7 is a binding site for ATP; the sequence is KNALR. Residues Glu-50 and Glu-55 each contribute to the substrate site. Residue 115–123 participates in ATP binding; the sequence is RLGFGKGYY. Residue Asp-124 coordinates Mg(2+). Arg-125 and Trp-153 together coordinate ATP. Mg(2+) is bound at residue Asp-154.

It belongs to the 5-formyltetrahydrofolate cyclo-ligase family. In terms of assembly, monomer or homodimer. Requires Mg(2+) as cofactor. Mn(2+) serves as cofactor. Ca(2+) is required as a cofactor. The cofactor is Zn(2+). It depends on Fe(2+) as a cofactor. Requires Co(2+) as cofactor. Cu(2+) serves as cofactor.

The protein resides in the cytoplasm. It carries out the reaction (6S)-5-formyl-5,6,7,8-tetrahydrofolate + ATP = (6R)-5,10-methenyltetrahydrofolate + ADP + phosphate. Involved in folate metabolism. Catalyzes the irreversible conversion of 5-formyltetrahydrofolate (5-FTHF) to yield 5,10-methenyltetrahydrofolate. The polypeptide is 5-formyltetrahydrofolate cyclo-ligase (Mycoplasma pneumoniae (strain ATCC 29342 / M129 / Subtype 1) (Mycoplasmoides pneumoniae)).